The chain runs to 145 residues: Transcription factor MEE8 (145 aa).

A compositionally biased stretch (basic and acidic residues) spans 33-49 (EKGVEKVGQKRSAESRR). The segment at 33 to 61 (EKGVEKVGQKRSAESRREGKKKRVKTQCV) is disordered. Positions 66–115 (DKSDHDTLLKKKRRERIRRQLETLKEITPNCPQSDINAILDCVIEYTNNL) constitute a bHLH domain.

Homodimer.

Its subcellular location is the nucleus. Its function is as follows. Required during early embryo development, for the endosperm formation. The protein is Transcription factor MEE8 (MEE8) of Arabidopsis thaliana (Mouse-ear cress).